Reading from the N-terminus, the 203-residue chain is MSQLTLTLLMIVSAYLAGSISSAVLVCRMRGLPDPRSEGSGNPGATNVLRIGGASSAAMVLFFDMLKGALPTYLAYLMGIDAISLGLIAIAACLGHIYPIFFGFKGGKGVATAFGAMAPIGDDLAICLMASWVVLLLISRYSSLAAIITALLAPLYTWWLDERFTIPVAMLSTLIIIRHKDNIQRLLKGEESKVSRKKRPKNP.

4 helical membrane passes run 6 to 26 (LTLL…AVLV), 82 to 102 (AISL…PIFF), 118 to 138 (APIG…LLLI), and 141 to 161 (YSSL…WWLD).

This sequence belongs to the PlsY family. Probably interacts with PlsX.

The protein resides in the cell inner membrane. The catalysed reaction is an acyl phosphate + sn-glycerol 3-phosphate = a 1-acyl-sn-glycero-3-phosphate + phosphate. The protein operates within lipid metabolism; phospholipid metabolism. Functionally, catalyzes the transfer of an acyl group from acyl-phosphate (acyl-PO(4)) to glycerol-3-phosphate (G3P) to form lysophosphatidic acid (LPA). This enzyme utilizes acyl-phosphate as fatty acyl donor, but not acyl-CoA or acyl-ACP. In Shewanella putrefaciens (strain CN-32 / ATCC BAA-453), this protein is Glycerol-3-phosphate acyltransferase.